We begin with the raw amino-acid sequence, 399 residues long: Flavohemoprotein (399 aa).

One can recognise a Globin domain in the interval 1–138; sequence MLDNKTIEII…IADAFIGIEK (138 aa). Position 85 (His-85) interacts with heme b. Catalysis depends on charge relay system residues Tyr-95 and Glu-137. The segment at 149–399 is reductase; sequence GGWKEYKPFV…GPQLSLAQSV (251 aa). In terms of domain architecture, FAD-binding FR-type spans 152-255; sequence KEYKPFVIAK…SAPAGDFVLD (104 aa). FAD-binding positions include Tyr-190 and 206 to 209; that span reads RQYS. 268-273 is an NADP(+) binding site; that stretch reads GVGITP. Residue 388–391 participates in FAD binding; sequence LFGP.

This sequence belongs to the globin family. Two-domain flavohemoproteins subfamily. In the C-terminal section; belongs to the flavoprotein pyridine nucleotide cytochrome reductase family. Heme b is required as a cofactor. Requires FAD as cofactor.

The enzyme catalyses 2 nitric oxide + NADPH + 2 O2 = 2 nitrate + NADP(+) + H(+). The catalysed reaction is 2 nitric oxide + NADH + 2 O2 = 2 nitrate + NAD(+) + H(+). Functionally, is involved in NO detoxification in an aerobic process, termed nitric oxide dioxygenase (NOD) reaction that utilizes O(2) and NAD(P)H to convert NO to nitrate, which protects the bacterium from various noxious nitrogen compounds. Therefore, plays a central role in the inducible response to nitrosative stress. The polypeptide is Flavohemoprotein (hmp) (Bacillus subtilis (strain 168)).